Consider the following 453-residue polypeptide: Chromosomal replication initiator protein DnaA (453 aa).

The tract at residues 1–74 (MKEKQFWNRI…GFEIYDAEIT (74 aa)) is domain I, interacts with DnaA modulators. The interval 74–113 (TPHYIFTKPQDTTSSQVEEATNLTLYDYSPKLVSIPYSDT) is domain II. Positions 114–331 (GLKEKYTFDN…GAINDITLIA (218 aa)) are domain III, AAA+ region. 4 residues coordinate ATP: G158, G160, K161, and T162. Positions 332-453 (RVKKIKDITI…EIESIKKKIK (122 aa)) are domain IV, binds dsDNA.

It belongs to the DnaA family. Oligomerizes as a right-handed, spiral filament on DNA at oriC.

The protein resides in the cytoplasm. Its function is as follows. Plays an essential role in the initiation and regulation of chromosomal replication. ATP-DnaA binds to the origin of replication (oriC) to initiate formation of the DNA replication initiation complex once per cell cycle. Binds the DnaA box (a 9 base pair repeat at the origin) and separates the double-stranded (ds)DNA. Forms a right-handed helical filament on oriC DNA; dsDNA binds to the exterior of the filament while single-stranded (ss)DNA is stabiized in the filament's interior. The ATP-DnaA-oriC complex binds and stabilizes one strand of the AT-rich DNA unwinding element (DUE), permitting loading of DNA polymerase. After initiation quickly degrades to an ADP-DnaA complex that is not apt for DNA replication. Binds acidic phospholipids. This chain is Chromosomal replication initiator protein DnaA, found in Streptococcus pneumoniae (strain P1031).